A 192-amino-acid chain; its full sequence is Elongation factor P (192 aa).

Belongs to the elongation factor P family.

It localises to the cytoplasm. It functions in the pathway protein biosynthesis; polypeptide chain elongation. Functionally, involved in peptide bond synthesis. Stimulates efficient translation and peptide-bond synthesis on native or reconstituted 70S ribosomes in vitro. Probably functions indirectly by altering the affinity of the ribosome for aminoacyl-tRNA, thus increasing their reactivity as acceptors for peptidyl transferase. This Borrelia duttonii (strain Ly) protein is Elongation factor P.